The primary structure comprises 332 residues: Cell growth regulator with RING finger domain protein 1 (332 aa).

The RING-type zinc-finger motif lies at 274–309 (CVVCQNGGVNWVLLPCRHACLCDSCVCYFKQCPMCR).

In terms of tissue distribution, highly expressed in testis, lower levels of expression is seen in skeletal muscle, liver, lung and brain.

The protein localises to the nucleus. It localises to the endoplasmic reticulum. Its function is as follows. Able to inhibit growth in several cell lines. This chain is Cell growth regulator with RING finger domain protein 1 (Cgrrf1), found in Rattus norvegicus (Rat).